The primary structure comprises 644 residues: Subversion of eukaryotic traffic protein A (644 aa).

The segment at 1–400 (MYKIYSYLGW…FHTLLSQVSD (400 aa)) is glucosyltransferase. A ptdIns(3)P-binding and localization domain region spans residues 401 to 644 (PVNPTAHELK…EYDNNHGLRI (244 aa)).

Post-translationally, ubiquitinated and polyubiquitinated when ectopically produced in both yeast and mammalian cells; however it is unsure if this modification occurs during the L.pneumophila infection of host cells.

The protein localises to the secreted. Its function is as follows. Secreted effector that interferes with vesicular trafficking of host cells. Possesses glucohydrolase and mono-O-glucosyltransferase activity by using UDP-glucose as a sugar donor substrate. Is able to glucosylate histones H4 and H3.1 in vitro, but it is unlikely that histones are the natural substrates for SetA. May glycosylate a component of the host cell vesicle trafficking machinery during L.pneumophila infection. Binds with high specificity to phosphatidylinositol 3-phosphate (PtdIns(3)P), (with a dissociation constant value of 809 nM), which guides SetA to the cytosolic leaflet of the early phagosome of the host cell. In Legionella pneumophila subsp. pneumophila (strain Philadelphia 1 / ATCC 33152 / DSM 7513), this protein is Subversion of eukaryotic traffic protein A (setA).